The sequence spans 89 residues: MPAPRYKSGSSKKVYRKAPGNSSIVHYRRKKQSKAVCGACGALLNGVPRGRAVEITKLAKTEKRPERPFGGNLCPKCVKKMMVAKARNF.

Residues 1-22 form a disordered region; the sequence is MPAPRYKSGSSKKVYRKAPGNS.

Belongs to the eukaryotic ribosomal protein eL34 family.

In Methanococcus maripaludis (strain DSM 14266 / JCM 13030 / NBRC 101832 / S2 / LL), this protein is Large ribosomal subunit protein eL34.